A 267-amino-acid polypeptide reads, in one-letter code: Matrilysin (267 aa).

The N-terminal stretch at 1-20 (MAAMRLTLFRIVCLLPGCLA) is a signal peptide. The propeptide at 21–97 (LPLSQEAGEV…PRCGVPDVAE (77 aa)) is activation peptide. The short motif at 88-95 (PRCGVPDV) is the Cysteine switch element. Residue C90 participates in Zn(2+) binding. D156 contacts Ca(2+). Zn(2+)-binding residues include H166 and D168. 4 residues coordinate Ca(2+): D173, G174, G176, and T178. H181 provides a ligand contact to Zn(2+). G188, G190, and D192 together coordinate Ca(2+). H194 lines the Zn(2+) pocket. Residues D196 and E199 each coordinate Ca(2+). H217 provides a ligand contact to Zn(2+). The active site involves E218. H221 and H227 together coordinate Zn(2+).

This sequence belongs to the peptidase M10A family. Ca(2+) serves as cofactor. Zn(2+) is required as a cofactor.

The protein localises to the secreted. The protein resides in the extracellular space. It localises to the extracellular matrix. The catalysed reaction is Cleavage of 14-Ala-|-Leu-15 and 16-Tyr-|-Leu-17 in B chain of insulin. No action on collagen types I, II, IV, V. Cleaves gelatin chain alpha2(I) &gt; alpha1(I).. Functionally, degrades casein, gelatins of types I, III, IV, and V, and fibronectin. Activates procollagenase. This chain is Matrilysin (Mmp7), found in Rattus norvegicus (Rat).